We begin with the raw amino-acid sequence, 91 residues long: Large ribosomal subunit protein bL27 (91 aa).

Residues Met1 to Gly13 show a composition bias toward polar residues. The tract at residues Met1–Arg20 is disordered.

The protein belongs to the bacterial ribosomal protein bL27 family.

The sequence is that of Large ribosomal subunit protein bL27 from Anaplasma phagocytophilum (strain HZ).